The primary structure comprises 535 residues: CTP synthase (535 aa).

The amidoligase domain stretch occupies residues 1–267 (MTKYIFVTGG…DSLVCSHLKL (267 aa)). Position 13 (Ser-13) interacts with CTP. Residue Ser-13 participates in UTP binding. Residue 14–19 (SLGKGI) participates in ATP binding. Tyr-54 is a binding site for L-glutamine. Asp-71 lines the ATP pocket. Mg(2+) contacts are provided by Asp-71 and Glu-141. CTP is bound by residues 148–150 (DIE), 188–193 (KTKPTQ), and Lys-224. Residues 188–193 (KTKPTQ) and Lys-224 contribute to the UTP site. The region spanning 292–534 (TIALVGKYVE…VHASLKTSEK (243 aa)) is the Glutamine amidotransferase type-1 domain. Gly-354 contributes to the L-glutamine binding site. Catalysis depends on Cys-381, which acts as the Nucleophile; for glutamine hydrolysis. L-glutamine contacts are provided by residues 382 to 385 (LGMQ), Glu-405, and Arg-462. Active-site residues include His-507 and Glu-509.

It belongs to the CTP synthase family. In terms of assembly, homotetramer.

The catalysed reaction is UTP + L-glutamine + ATP + H2O = CTP + L-glutamate + ADP + phosphate + 2 H(+). It catalyses the reaction L-glutamine + H2O = L-glutamate + NH4(+). It carries out the reaction UTP + NH4(+) + ATP = CTP + ADP + phosphate + 2 H(+). It functions in the pathway pyrimidine metabolism; CTP biosynthesis via de novo pathway; CTP from UDP: step 2/2. With respect to regulation, allosterically activated by GTP, when glutamine is the substrate; GTP has no effect on the reaction when ammonia is the substrate. The allosteric effector GTP functions by stabilizing the protein conformation that binds the tetrahedral intermediate(s) formed during glutamine hydrolysis. Inhibited by the product CTP, via allosteric rather than competitive inhibition. Catalyzes the ATP-dependent amination of UTP to CTP with either L-glutamine or ammonia as the source of nitrogen. Regulates intracellular CTP levels through interactions with the four ribonucleotide triphosphates. The polypeptide is CTP synthase (Bacillus licheniformis (strain ATCC 14580 / DSM 13 / JCM 2505 / CCUG 7422 / NBRC 12200 / NCIMB 9375 / NCTC 10341 / NRRL NRS-1264 / Gibson 46)).